A 221-amino-acid polypeptide reads, in one-letter code: Urease accessory protein UreF (221 aa).

The protein belongs to the UreF family. In terms of assembly, ureD, UreF and UreG form a complex that acts as a GTP-hydrolysis-dependent molecular chaperone, activating the urease apoprotein by helping to assemble the nickel containing metallocenter of UreC. The UreE protein probably delivers the nickel.

It is found in the cytoplasm. Required for maturation of urease via the functional incorporation of the urease nickel metallocenter. This chain is Urease accessory protein UreF, found in Aliivibrio fischeri (strain ATCC 700601 / ES114) (Vibrio fischeri).